We begin with the raw amino-acid sequence, 161 residues long: RNA pyrophosphohydrolase (161 aa).

In terms of domain architecture, Nudix hydrolase spans 12–154 (PYRPGVGMMI…KRKLYQAVVK (143 aa)). Positions 46–67 (GGIVPGETPSIAAMREMLEEIG) match the Nudix box motif.

It belongs to the Nudix hydrolase family. RppH subfamily. The cofactor is a divalent metal cation.

Functionally, accelerates the degradation of transcripts by removing pyrophosphate from the 5'-end of triphosphorylated RNA, leading to a more labile monophosphorylated state that can stimulate subsequent ribonuclease cleavage. This Rickettsia rickettsii (strain Iowa) protein is RNA pyrophosphohydrolase.